Reading from the N-terminus, the 87-residue chain is Acyl-CoA-binding protein (87 aa).

Ser2 is subject to N-acetylserine. One can recognise an ACB domain in the interval 2–87 (SQAEFDKAAE…VEELKKKYGI (86 aa)). Lys8 carries the N6-acetyllysine; alternate modification. Lys8 carries the post-translational modification N6-succinyllysine; alternate. Position 14 (Lys14) interacts with an acyl-CoA. An N6-succinyllysine modification is found at Lys17. An N6-acetyllysine modification is found at Lys19. Tyr29 carries the phosphotyrosine modification. An acyl-CoA contacts are provided by residues 29–33 (YSHYK), Lys51, Lys55, and Tyr74. Position 51 is an N6-acetyllysine (Lys51). N6-acetyllysine; alternate is present on Lys55. N6-succinyllysine; alternate is present on Lys55. The residue at position 55 (Lys55) is an N6-(2-hydroxyisobutyryl)lysine; alternate. Lys55 carries the post-translational modification N6-malonyllysine; alternate. Lys77 bears the N6-acetyllysine; alternate mark. Lys77 is modified (N6-succinyllysine; alternate).

It belongs to the ACBP family. In terms of assembly, monomer.

It localises to the endoplasmic reticulum. It is found in the golgi apparatus. In terms of biological role, binds medium- and long-chain acyl-CoA esters with very high affinity and may function as an intracellular carrier of acyl-CoA esters. This Chaetophractus villosus (South American armadillo) protein is Acyl-CoA-binding protein (DBI).